Consider the following 501-residue polypeptide: G protein-activated inward rectifier potassium channel 1 (501 aa).

The tract at residues Met-1–Lys-40 is disordered. Residues Met-1–Trp-80 lie on the Cytoplasmic side of the membrane. Residues Ser-18–Val-38 are compositionally biased toward low complexity. Residues Arg-81 to Ile-105 form a helical membrane-spanning segment. Topologically, residues Ala-106–Asn-129 are extracellular. Residue Asn-119 is glycosylated (N-linked (GlcNAc...) asparagine). The helical; Pore-forming intramembrane region spans Phe-130–Glu-141. The segment at residues Ala-142–Tyr-148 is an intramembrane region (pore-forming). The Selectivity filter signature appears at Thr-143–Tyr-148. Residues Arg-149 to Glu-157 are Extracellular-facing. The chain crosses the membrane as a helical span at residues Gly-158–Cys-179. The Cytoplasmic portion of the chain corresponds to Met-180–Thr-501. The polyphosphoinositide (PIP2)-binding stretch occupies residues Ile-182–Leu-209. Ser-385 and Ser-424 each carry phosphoserine.

It belongs to the inward rectifier-type potassium channel (TC 1.A.2.1) family. KCNJ3 subfamily. Associates with KCNJ5/GIRK4 or KCNJ6/GIRK2 to form a G-protein activated heteromultimer pore-forming unit. The resulting inward current is much larger. Associates with KCNJ9/GIRK3 to form a G-protein activated heteromultimer pore-forming unit.

Its subcellular location is the membrane. It catalyses the reaction K(+)(in) = K(+)(out). With respect to regulation, heteromultimer composed of KCNJ3/GIRK1 and KCNJ5/GIRK4 is activated by phosphatidylinositol 4,5 biphosphate (PtdIns(4,5)P2). Its function is as follows. Inward rectifier potassium channels are characterized by a greater tendency to allow potassium to flow into the cell rather than out of it. Their voltage dependence is regulated by the concentration of extracellular potassium; as external potassium is raised, the voltage range of the channel opening shifts to more positive voltages. The inward rectification is mainly due to the blockage of outward current by internal magnesium. This potassium channel is controlled by G proteins. This receptor plays a crucial role in regulating the heartbeat. The protein is G protein-activated inward rectifier potassium channel 1 (KCNJ3) of Homo sapiens (Human).